We begin with the raw amino-acid sequence, 797 residues long: G-patch domain-containing protein C1486.03 (797 aa).

A compositionally biased stretch (polar residues) spans Met-1–Ser-12. Disordered regions lie at residues Met-1–Gln-33 and Val-159–Glu-204. A G-patch domain is found at Thr-115–Glu-161. Positions Val-159–Thr-185 are enriched in basic and acidic residues. A compositionally biased stretch (basic residues) spans Val-186 to Leu-199.

Belongs to the TFP11/STIP family.

It is found in the cytoplasm. The protein localises to the cytoskeleton. Its subcellular location is the microtubule organizing center. The protein resides in the spindle pole body. This chain is G-patch domain-containing protein C1486.03, found in Schizosaccharomyces pombe (strain 972 / ATCC 24843) (Fission yeast).